A 342-amino-acid chain; its full sequence is Trace amine-associated receptor 3 (342 aa).

At 1 to 35 the chain is on the extracellular side; sequence MDLIYIPEDLSSCPKFGNKSCPPTNRSFRVRLIMY. Residues Asn18 and Asn25 are each glycosylated (N-linked (GlcNAc...) asparagine). 2 disulfide bridges follow: Cys21-Cys185 and Cys104-Cys189. Residues 36–56 traverse the membrane as a helical segment; that stretch reads LLMTGAMVITIFGNLVIIISI. Over 57–68 the chain is Cytoplasmic; the sequence is SHFKQLHSPTNF. Residues 69 to 89 form a helical membrane-spanning segment; the sequence is LILSMATTDFLLGFVIMPYSM. The Extracellular segment spans residues 90-150; that stretch reads VRSVESCWYF…TTMTASMIKR (61 aa). A helical transmembrane segment spans residues 151-168; it reads LLFFCWAAPALFSFGLVL. Over 169-172 the chain is Cytoplasmic; the sequence is SEAN. Residues 173 to 186 are extracellular Loop 2 (ECL2); the sequence is VSGMQSYEILIACF. The helical transmembrane segment at 173-193 threads the bilayer; that stretch reads VSGMQSYEILIACFNFCALTF. Residues 194–198 lie on the Extracellular side of the membrane; sequence NKFWG. The helical transmembrane segment at 199–223 threads the bilayer; it reads TILFTTCFFTPGSIMVGIYGKIFIV. Residues 224 to 256 lie on the Cytoplasmic side of the membrane; sequence SRRHARALGNMPENTKGAGRNLSKKKDRKAAKT. The helical transmembrane segment at 257–277 threads the bilayer; that stretch reads LGIVMGVFLACWLPCFLAVLI. Topologically, residues 278 to 286 are extracellular; the sequence is DPYLDYSTP. Residues 287–307 form a helical membrane-spanning segment; it reads IIVLDLLVWLGYFNSTCNPLI. Over 308–342 the chain is Cytoplasmic; that stretch reads HGFFYPWFRKALEHIVSGKIFRSNSDTANLFPEAH.

The protein belongs to the G-protein coupled receptor 1 family.

Its subcellular location is the cell membrane. Its function is as follows. Olfactory receptor activated by several primary trace amines, including isoamylamine. Activated by isoamylamine and cyclohexylamine, but not to the corresponding alcohols, isoamylalcohol and cyclohexanol. This receptor is probably mediated by the G(s)-class of G-proteins which activate adenylate cyclase. This Rattus norvegicus (Rat) protein is Trace amine-associated receptor 3 (Taar3).